The sequence spans 251 residues: Triosephosphate isomerase (251 aa).

9 to 11 is a substrate binding site; sequence NWK. His-95 serves as the catalytic Electrophile. Catalysis depends on Glu-167, which acts as the Proton acceptor. Residues Gly-173, Ser-213, and 234–235 each bind substrate; that span reads GG.

Belongs to the triosephosphate isomerase family. Homodimer.

It localises to the cytoplasm. The catalysed reaction is D-glyceraldehyde 3-phosphate = dihydroxyacetone phosphate. Its pathway is carbohydrate biosynthesis; gluconeogenesis. It functions in the pathway carbohydrate degradation; glycolysis; D-glyceraldehyde 3-phosphate from glycerone phosphate: step 1/1. Involved in the gluconeogenesis. Catalyzes stereospecifically the conversion of dihydroxyacetone phosphate (DHAP) to D-glyceraldehyde-3-phosphate (G3P). This chain is Triosephosphate isomerase, found in Lacticaseibacillus casei (strain BL23) (Lactobacillus casei).